Reading from the N-terminus, the 612-residue chain is 1,8-cineole synthase, chloroplastic (612 aa).

The N-terminal 52 residues, 1-52 (MALVSGAPLASRSCLNKSLISSTHELKPLRRTILPTLRWKSATPSINMCLTT), are a transit peptide targeting the chloroplast. Residues D363, D367, and D515 each coordinate Mg(2+). The short motif at 363-367 (DDIYD) is the DDXXD motif element.

This sequence belongs to the terpene synthase family. Tpsd subfamily. Requires Mg(2+) as cofactor. The cofactor is Mn(2+).

Its subcellular location is the plastid. The protein resides in the chloroplast. It carries out the reaction (2E)-geranyl diphosphate + H2O = 1,8-cineole + diphosphate. The protein operates within terpene metabolism; oleoresin biosynthesis. In terms of biological role, terpene synthase (TPS) involved in the biosynthesis of monoterpene natural products included in conifer oleoresin secretions and volatile emissions; these compounds contribute to biotic and abiotic stress defense against herbivores and pathogens. Catalyzes the conversion of (2E)-geranyl diphosphate (GPP) to 1,8-cineole. The protein is 1,8-cineole synthase, chloroplastic of Picea engelmannii x Picea glauca (Hybrid white spruce).